Reading from the N-terminus, the 332-residue chain is UDP-3-O-acylglucosamine N-acyltransferase (332 aa).

Histidine 235 functions as the Proton acceptor in the catalytic mechanism.

It belongs to the transferase hexapeptide repeat family. LpxD subfamily. In terms of assembly, homotrimer.

The catalysed reaction is a UDP-3-O-[(3R)-3-hydroxyacyl]-alpha-D-glucosamine + a (3R)-hydroxyacyl-[ACP] = a UDP-2-N,3-O-bis[(3R)-3-hydroxyacyl]-alpha-D-glucosamine + holo-[ACP] + H(+). It participates in bacterial outer membrane biogenesis; LPS lipid A biosynthesis. Functionally, catalyzes the N-acylation of UDP-3-O-acylglucosamine using 3-hydroxyacyl-ACP as the acyl donor. Is involved in the biosynthesis of lipid A, a phosphorylated glycolipid that anchors the lipopolysaccharide to the outer membrane of the cell. In Fusobacterium nucleatum subsp. nucleatum (strain ATCC 25586 / DSM 15643 / BCRC 10681 / CIP 101130 / JCM 8532 / KCTC 2640 / LMG 13131 / VPI 4355), this protein is UDP-3-O-acylglucosamine N-acyltransferase.